The sequence spans 425 residues: Serine--tRNA ligase (425 aa).

232–234 (TSE) serves as a coordination point for L-serine. ATP-binding positions include 263–265 (RRE) and valine 279. An L-serine-binding site is contributed by glutamate 286. 350–353 (EAVS) contacts ATP. Threonine 387 is an L-serine binding site.

Belongs to the class-II aminoacyl-tRNA synthetase family. Type-1 seryl-tRNA synthetase subfamily. In terms of assembly, homodimer. The tRNA molecule binds across the dimer.

The protein resides in the cytoplasm. It catalyses the reaction tRNA(Ser) + L-serine + ATP = L-seryl-tRNA(Ser) + AMP + diphosphate + H(+). The catalysed reaction is tRNA(Sec) + L-serine + ATP = L-seryl-tRNA(Sec) + AMP + diphosphate + H(+). It participates in aminoacyl-tRNA biosynthesis; selenocysteinyl-tRNA(Sec) biosynthesis; L-seryl-tRNA(Sec) from L-serine and tRNA(Sec): step 1/1. Functionally, catalyzes the attachment of serine to tRNA(Ser). Is also able to aminoacylate tRNA(Sec) with serine, to form the misacylated tRNA L-seryl-tRNA(Sec), which will be further converted into selenocysteinyl-tRNA(Sec). In Methanoculleus marisnigri (strain ATCC 35101 / DSM 1498 / JR1), this protein is Serine--tRNA ligase.